The following is a 173-amino-acid chain: Adenine phosphoribosyltransferase (173 aa).

It belongs to the purine/pyrimidine phosphoribosyltransferase family. In terms of assembly, homodimer.

It is found in the cytoplasm. It catalyses the reaction AMP + diphosphate = 5-phospho-alpha-D-ribose 1-diphosphate + adenine. The protein operates within purine metabolism; AMP biosynthesis via salvage pathway; AMP from adenine: step 1/1. In terms of biological role, catalyzes a salvage reaction resulting in the formation of AMP, that is energically less costly than de novo synthesis. The polypeptide is Adenine phosphoribosyltransferase (Solibacter usitatus (strain Ellin6076)).